The sequence spans 701 residues: Polyribonucleotide nucleotidyltransferase (701 aa).

Mg(2+) contacts are provided by aspartate 490 and aspartate 496. The 60-residue stretch at 557 to 616 (PKVVTMSINPDKIRDVIGPGGKKINEIIDETGVKLDIEQDGTIFIGAVDQAMINRAKEII) folds into the KH domain. The 69-residue stretch at 626-694 (GQVYHAKVKR…KQGRVNASHK (69 aa)) folds into the S1 motif domain.

This sequence belongs to the polyribonucleotide nucleotidyltransferase family. Mg(2+) serves as cofactor.

The protein localises to the cytoplasm. It carries out the reaction RNA(n+1) + phosphate = RNA(n) + a ribonucleoside 5'-diphosphate. Involved in mRNA degradation. Catalyzes the phosphorolysis of single-stranded polyribonucleotides processively in the 3'- to 5'-direction. This is Polyribonucleotide nucleotidyltransferase from Staphylococcus epidermidis (strain ATCC 12228 / FDA PCI 1200).